A 405-amino-acid polypeptide reads, in one-letter code: MRGQNRRGYRNIEGRLSLSSHSSHSSPRQTHVTNLRPAEIKVVQDVVDGCYVATDDVLNLSNFSKNTEFVERDMLMCLTKTRVMSVVLQHIGYKYPRISGISFSNNRLCHLDHLSSLSSISKFLKFLDLSHNQISSGEELKKLGTIPVETVFFEGNPVCEKFVQCAEYANFIQKTFPKCSNLDGMEVEPKPDHNRIEQIIPFRNGYYGSDEVRTLVEEFIITYYKIYDGADGQQTRKQLLDAYDTNNSTFTHTVVCLWDPIKFVMYPDSESYRMYLRTSHNVLNQEYFAANRASRISHGAMDIVVALSRLPATIHLMDTFVVDVFLVSATLLGFTLHGTFRDGPSAIKPENTEEHDNYFTRTFMVAPRGEGKVAIVSDQLFISSMSKRRGDQYRMLVETATDIDQ.

A disordered region spans residues 1 to 33; that stretch reads MRGQNRRGYRNIEGRLSLSSHSSHSSPRQTHVT. The segment covering 16-26 has biased composition (low complexity); sequence LSLSSHSSHSS. The 69-residue stretch at 26–94 folds into the RRM domain; it reads SPRQTHVTNL…SVVLQHIGYK (69 aa). 2 LRR repeats span residues 97–118 and 123–144; these read RISG…SSLS and FLKF…KKLG. Residues 215 to 382 form the NTF2 domain; the sequence is LVEEFIITYY…VAIVSDQLFI (168 aa).

This sequence belongs to the NXF family.

Its subcellular location is the nucleus. Involved in the export of cellular mRNA to the cytoplasm. Plays a role in the nuclear retention of unspliced mRNAs. The protein is Nuclear RNA export factor 2 of Caenorhabditis elegans.